Consider the following 154-residue polypeptide: Large ribosomal subunit protein uL30 (154 aa).

The protein belongs to the universal ribosomal protein uL30 family. As to quaternary structure, part of the 50S ribosomal subunit.

In Methanococcus maripaludis (strain DSM 14266 / JCM 13030 / NBRC 101832 / S2 / LL), this protein is Large ribosomal subunit protein uL30.